A 156-amino-acid chain; its full sequence is ATP synthase subunit b (156 aa).

The helical transmembrane segment at 11–31 threads the bilayer; the sequence is AIAFVLFVLFCMKYVWPPLMA.

The protein belongs to the ATPase B chain family. F-type ATPases have 2 components, F(1) - the catalytic core - and F(0) - the membrane proton channel. F(1) has five subunits: alpha(3), beta(3), gamma(1), delta(1), epsilon(1). F(0) has three main subunits: a(1), b(2) and c(10-14). The alpha and beta chains form an alternating ring which encloses part of the gamma chain. F(1) is attached to F(0) by a central stalk formed by the gamma and epsilon chains, while a peripheral stalk is formed by the delta and b chains.

It is found in the cell inner membrane. Functionally, f(1)F(0) ATP synthase produces ATP from ADP in the presence of a proton or sodium gradient. F-type ATPases consist of two structural domains, F(1) containing the extramembraneous catalytic core and F(0) containing the membrane proton channel, linked together by a central stalk and a peripheral stalk. During catalysis, ATP synthesis in the catalytic domain of F(1) is coupled via a rotary mechanism of the central stalk subunits to proton translocation. Its function is as follows. Component of the F(0) channel, it forms part of the peripheral stalk, linking F(1) to F(0). The protein is ATP synthase subunit b of Sodalis glossinidius (strain morsitans).